The sequence spans 276 residues: MGHTIKAPLTVQGVGLHSGVETTVTLCPVAAGKGRYFQRVDLPKKPIIPADLTWVREAMLSTELGEPGATIRTVEHLLATLVALDIGDLRIEVNGPEVPLLDGSALSWLTAIAKVGTRPRSKKSQDQPIVITDPLTCQLEDAFVAAFPCATTRFSYGVDYPYLPIGKQWYTWEPDQENFATAIAPARTFGFADQIEKLRQAGLIKGGSLENALVCDKEKWLNPPLRFPDEPVRHKLLDLLGDLSLLGKIPQAHFVAYKASHKLHTQLAQKIADTYR.

3 residues coordinate Zn(2+): histidine 76, histidine 234, and aspartate 238. Histidine 261 serves as the catalytic Proton donor.

The protein belongs to the LpxC family. It depends on Zn(2+) as a cofactor.

The catalysed reaction is a UDP-3-O-[(3R)-3-hydroxyacyl]-N-acetyl-alpha-D-glucosamine + H2O = a UDP-3-O-[(3R)-3-hydroxyacyl]-alpha-D-glucosamine + acetate. It participates in glycolipid biosynthesis; lipid IV(A) biosynthesis; lipid IV(A) from (3R)-3-hydroxytetradecanoyl-[acyl-carrier-protein] and UDP-N-acetyl-alpha-D-glucosamine: step 2/6. Catalyzes the hydrolysis of UDP-3-O-myristoyl-N-acetylglucosamine to form UDP-3-O-myristoylglucosamine and acetate, the committed step in lipid A biosynthesis. In Synechocystis sp. (strain ATCC 27184 / PCC 6803 / Kazusa), this protein is UDP-3-O-acyl-N-acetylglucosamine deacetylase.